The sequence spans 229 residues: Ribonuclease 3 (229 aa).

The 123-residue stretch at 5 to 127 (LSRLERQLGY…LIGAIYLDAG (123 aa)) folds into the RNase III domain. Glu40 lines the Mg(2+) pocket. Asp44 is an active-site residue. The Mg(2+) site is built by Asp113 and Glu116. Residue Glu116 is part of the active site. One can recognise a DRBM domain in the interval 154 to 224 (DPKTRLQEFL…AAAALIALGV (71 aa)).

This sequence belongs to the ribonuclease III family. Homodimer. Requires Mg(2+) as cofactor.

Its subcellular location is the cytoplasm. It carries out the reaction Endonucleolytic cleavage to 5'-phosphomonoester.. Its function is as follows. Digests double-stranded RNA. Involved in the processing of primary rRNA transcript to yield the immediate precursors to the large and small rRNAs (23S and 16S). Processes some mRNAs, and tRNAs when they are encoded in the rRNA operon. Processes pre-crRNA and tracrRNA of type II CRISPR loci if present in the organism. The sequence is that of Ribonuclease 3 from Pseudomonas syringae pv. syringae (strain B728a).